The chain runs to 333 residues: Olfactory receptor 1078 (333 aa).

At 1 to 25 the chain is on the extracellular side; that stretch reads MDSSNRTRVSEFLLLGFVENKDLQP. Asn5 carries N-linked (GlcNAc...) asparagine glycosylation. Residues 26-50 traverse the membrane as a helical segment; it reads LIYGLFLSMYLVTVIGNISIIVAII. The Cytoplasmic portion of the chain corresponds to 51–57; it reads SDPCLHT. Residues 58–79 traverse the membrane as a helical segment; that stretch reads PMYFFLSNLSFVDICFISTTVP. At 80–100 the chain is on the extracellular side; sequence KMLVNIQTQNNVITYAGCITQ. The cysteines at positions 97 and 189 are disulfide-linked. A helical transmembrane segment spans residues 101-120; it reads IYFFLLFVELDNFLLTIMAY. Over 121 to 139 the chain is Cytoplasmic; the sequence is DRYVAICHPMHYTVIMNYK. The helical transmembrane segment at 140 to 158 threads the bilayer; that stretch reads LCGFLVLVSWIVSVLHALF. Topologically, residues 159–196 are extracellular; the sequence is QSLMMLALPFCTHLEIPHYFCEPNQVIQLTCSDAFLND. Residues 197–219 traverse the membrane as a helical segment; the sequence is LVIYFTLVLLATVPLAGIFYSYF. The Cytoplasmic portion of the chain corresponds to 220–236; it reads KIVSSICAISSVHGKYK. Residues 237–260 form a helical membrane-spanning segment; sequence AFSTCASHLSVVSLFYCTGLGVYL. Residues 261 to 272 lie on the Extracellular side of the membrane; it reads SSAANNSSQASA. The helical transmembrane segment at 273-292 threads the bilayer; that stretch reads TASVMYTVVTPMVNPFIYSL. Topologically, residues 293–333 are cytoplasmic; the sequence is RNKDVKSVLKKTLCEEVIRSPPSLLHFFLVLCHLPCFIFCY.

It belongs to the G-protein coupled receptor 1 family. In terms of tissue distribution, olfactory epithelium.

It localises to the cell membrane. Odorant receptor. This chain is Olfactory receptor 1078 (Olr1078), found in Rattus norvegicus (Rat).